The sequence spans 465 residues: Ribulose bisphosphate carboxylase large chain (465 aa).

K4 bears the N6,N6,N6-trimethyllysine mark. Residues N113 and T163 each coordinate substrate. K165 functions as the Proton acceptor in the catalytic mechanism. Residue K167 coordinates substrate. The Mg(2+) site is built by K191, D193, and E194. K191 carries the N6-carboxylysine modification. Catalysis depends on H284, which acts as the Proton acceptor. Residues R285, H317, and S369 each contribute to the substrate site.

It belongs to the RuBisCO large chain family. Type I subfamily. In terms of assembly, heterohexadecamer of 8 large chains and 8 small chains; disulfide-linked. The disulfide link is formed within the large subunit homodimers. Requires Mg(2+) as cofactor. The disulfide bond which can form in the large chain dimeric partners within the hexadecamer appears to be associated with oxidative stress and protein turnover.

It is found in the plastid. Its subcellular location is the chloroplast. It catalyses the reaction 2 (2R)-3-phosphoglycerate + 2 H(+) = D-ribulose 1,5-bisphosphate + CO2 + H2O. It carries out the reaction D-ribulose 1,5-bisphosphate + O2 = 2-phosphoglycolate + (2R)-3-phosphoglycerate + 2 H(+). RuBisCO catalyzes two reactions: the carboxylation of D-ribulose 1,5-bisphosphate, the primary event in carbon dioxide fixation, as well as the oxidative fragmentation of the pentose substrate in the photorespiration process. Both reactions occur simultaneously and in competition at the same active site. The chain is Ribulose bisphosphate carboxylase large chain from Combretum indicum (Rangoon creeper).